Reading from the N-terminus, the 124-residue chain is Small ribosomal subunit protein uS13 (124 aa).

The tract at residues 94–124 is disordered; the sequence is RGMPVRGQRTKTNARTRKGPKRTIAGKKKAR.

This sequence belongs to the universal ribosomal protein uS13 family. As to quaternary structure, part of the 30S ribosomal subunit. Forms a loose heterodimer with protein S19. Forms two bridges to the 50S subunit in the 70S ribosome.

Its function is as follows. Located at the top of the head of the 30S subunit, it contacts several helices of the 16S rRNA. In the 70S ribosome it contacts the 23S rRNA (bridge B1a) and protein L5 of the 50S subunit (bridge B1b), connecting the 2 subunits; these bridges are implicated in subunit movement. Contacts the tRNAs in the A and P-sites. In Mycobacterium tuberculosis (strain ATCC 25177 / H37Ra), this protein is Small ribosomal subunit protein uS13.